The primary structure comprises 185 residues: Ribosome-recycling factor (185 aa).

This sequence belongs to the RRF family.

The protein resides in the cytoplasm. In terms of biological role, responsible for the release of ribosomes from messenger RNA at the termination of protein biosynthesis. May increase the efficiency of translation by recycling ribosomes from one round of translation to another. The protein is Ribosome-recycling factor of Vesicomyosocius okutanii subsp. Calyptogena okutanii (strain HA).